Here is a 369-residue protein sequence, read N- to C-terminus: MYIDRILLKNFRNYKDETIKFSKNLNIIYGQNAQGKTNIIEAVFLCASGRSHRTSKDTELVNIDGTGFSVLLDLESSEGRKKIEIDYECGKKKVVKINEIPLKKIGNLMGNLLAVIFSPEDILIIKEGPSERRRFIDITLCQLKPSYFYDLQQYNKVLSQRNMLLKEIQYKRNLLDTLEVWDYKMAELSSRIMTTRSEFIKRLCEISKKIHLKLTDGSEIMEIKYSPSVDLHDLSNPSEIKNEFIRQLNSIRDIELKRCVTLIGPHRDDYEMELNGLNLKMFGSQGQQRTSLLSLKLAEIEIIKSETDEDPVLLLDDVMSELDFKRREFLLENIRNVQTFITCTDKELFENRNFGDNLYIRVEAGRTYY.

30 to 37 (GQNAQGKT) contributes to the ATP binding site.

It belongs to the RecF family.

Its subcellular location is the cytoplasm. The RecF protein is involved in DNA metabolism; it is required for DNA replication and normal SOS inducibility. RecF binds preferentially to single-stranded, linear DNA. It also seems to bind ATP. The protein is DNA replication and repair protein RecF of Acetivibrio thermocellus (strain ATCC 27405 / DSM 1237 / JCM 9322 / NBRC 103400 / NCIMB 10682 / NRRL B-4536 / VPI 7372) (Clostridium thermocellum).